The sequence spans 252 residues: 3-dehydroquinate dehydratase (252 aa).

Residues Ser21, 46–48, and Arg82 each bind 3-dehydroquinate; that span reads EWR. His143 serves as the catalytic Proton donor/acceptor. Lys170 serves as the catalytic Schiff-base intermediate with substrate. The 3-dehydroquinate site is built by Arg213, Ser232, and Gln236.

This sequence belongs to the type-I 3-dehydroquinase family. As to quaternary structure, homodimer.

It catalyses the reaction 3-dehydroquinate = 3-dehydroshikimate + H2O. Its pathway is metabolic intermediate biosynthesis; chorismate biosynthesis; chorismate from D-erythrose 4-phosphate and phosphoenolpyruvate: step 3/7. Its function is as follows. Involved in the third step of the chorismate pathway, which leads to the biosynthesis of aromatic amino acids. Catalyzes the cis-dehydration of 3-dehydroquinate (DHQ) and introduces the first double bond of the aromatic ring to yield 3-dehydroshikimate. The sequence is that of 3-dehydroquinate dehydratase from Salmonella dublin (strain CT_02021853).